Here is a 214-residue protein sequence, read N- to C-terminus: Ribonuclease HII (214 aa).

In terms of domain architecture, RNase H type-2 spans glutamate 26–arginine 214. Residues aspartate 32, glutamate 33, and aspartate 124 each contribute to the a divalent metal cation site.

This sequence belongs to the RNase HII family. The cofactor is Mn(2+). Mg(2+) is required as a cofactor.

Its subcellular location is the cytoplasm. The catalysed reaction is Endonucleolytic cleavage to 5'-phosphomonoester.. In terms of biological role, endonuclease that specifically degrades the RNA of RNA-DNA hybrids. The polypeptide is Ribonuclease HII (Burkholderia orbicola (strain MC0-3)).